The following is a 303-amino-acid chain: Phenoloxidase-activating factor 2 (303 aa).

Positions 1–24 are disordered; sequence PDRRPPEDPITPPPPTKEEQRAGC. The Peptidase S1 domain occupies 36–292; it reads IIGDKDGEAK…LRDWIDDKVA (257 aa). Intrachain disulfides connect Cys173–Cys247, Cys206–Cys227, and Cys237–Cys268.

The protein belongs to the peptidase S1 family. Heterodimer.

The protein resides in the secreted. In terms of biological role, binds and activates processed prophenoloxidases PPO1 and PPO2 and thus is involved in the activation of the prophenoloxidase cascade probably following the recognition of pathogen-derived products. Binds the A.niger cell wall component alpha-1,3-glucan, a fungal pathogen-associated molecular pattern (PAMP) that activates the host immune response. The polypeptide is Phenoloxidase-activating factor 2 (LOC113510063) (Galleria mellonella (Greater wax moth)).